Reading from the N-terminus, the 61-residue chain is Metallothionein-1D (61 aa).

Residues 1–29 (MDPNCSCSTGGSCSCATSCTCKACRCTSC) are beta. C5, C7, C13, C15, C19, C21, C24, C26, C29, C33, C34, C36, C37, C41, C44, C48, C50, C57, C59, and C60 together coordinate a divalent metal cation. Positions 30–61 (KKSCCSCCPAGCAKCAQGCICKGASDKCSCCA) are alpha.

The protein belongs to the metallothionein superfamily. Type 1 family. In terms of assembly, monomer.

Metallothioneins have a high content of cysteine residues that bind various heavy metals; these proteins are transcriptionally regulated by both heavy metals and glucocorticoids. This chain is Metallothionein-1D (MT1D), found in Sus scrofa (Pig).